Consider the following 554-residue polypeptide: Raftlin (554 aa).

Gly2 carries the N-myristoyl glycine lipid modification. A lipid anchor (S-palmitoyl cysteine) is attached at Cys3. Phosphoserine is present on residues Ser183 and Ser199. Disordered regions lie at residues 192 to 249 (CTLG…NEAG), 441 to 488 (KKRE…DQFS), and 504 to 554 (GRAS…TEAN). 2 stretches are compositionally biased toward basic and acidic residues: residues 198 to 209 (SSLENDTPKAAE) and 475 to 487 (QAEENEKNLEDQF). Phosphoserine is present on residues Ser507 and Ser530. The span at 526–542 (HNRDSVALRHSNPRAEA) shows a compositional bias: basic and acidic residues.

The protein belongs to the raftlin family. Interacts with TLR4; the interaction occurs in response to lipopolysaccharide stimulation. Interacts with CLTC; the interaction occurs in response to pathogens. Interacts with AP2A1 and AP2B1. In terms of tissue distribution, expressed in T-cells, B-cells, thymus and spleen (at protein level). Expressed in dendritic cells, macrophages, heart, lung and small intestine.

The protein localises to the cell membrane. The protein resides in the cytoplasm. It is found in the membrane raft. It localises to the endosome. Its subcellular location is the early endosome. Involved in protein trafficking via association with clathrin and AP2 complex. Upon bacterial lipopolysaccharide stimulation, mediates internalization of TLR4 to endosomes in dendritic cells and macrophages, and internalization of poly(I:C) to TLR3-positive endosomes in myeloid dendritic cells and epithelial cells; resulting in activation of TICAM1-mediated signaling and subsequent IFNB1 production. Involved in T-cell antigen receptor-mediated signaling by regulating tyrosine kinase LCK localization, T-cell dependent antibody production and cytokine secretion. May regulate B-cell antigen receptor-mediated signaling. May play a pivotal role in the formation and/or maintenance of lipid rafts. This is Raftlin (Rftn1) from Mus musculus (Mouse).